Consider the following 623-residue polypeptide: Heterogeneous nuclear ribonucleoprotein Q (623 aa).

Residue alanine 2 is modified to N-acetylalanine. Position 159 is a phosphoserine (serine 159). RRM domains are found at residues 162-241, 243-325, and 338-408; these read TEIF…ISVA, NRLF…WADP, and KVLF…FAKP. Lysine 168 is covalently cross-linked (Glycyl lysine isopeptide (Lys-Gly) (interchain with G-Cter in SUMO2)). An N6-acetyllysine modification is found at lysine 221. Lysine 363 carries the N6-acetyllysine modification. Tyrosine 373 bears the Phosphotyrosine mark. Positions 400–561 are interaction with APOBEC1; it reads NIEIVFAKPP…GARGGRGGNV (162 aa). Arginine 444 bears the Asymmetric dimethylarginine; by PRMT1; alternate mark. Residue arginine 444 is modified to Omega-N-methylarginine; by PRMT1; alternate. 6 consecutive repeat copies span residues 448-450, 451-453, 460-464, 469-472, 478-480, and 485-488. Residues 448 to 559 form an 8 X 3 AA repeats of R-G-G region; the sequence is RGGRGGYGYP…VRGARGGRGG (112 aa). Positions 460-488 are 3 X 4 AA repeats of Y-Y-G-Y; sequence YYGYEDYYDYYGYDYHNYRGGYEDPYYGY. Arginine 496 is modified (omega-N-methylarginine; by PRMT1). Residues 497-623 are disordered; it reads GRGGRGARGA…YQDTFGQQWK (127 aa). Residues 498-500 form a 1-4 repeat; that stretch reads RGG. Residues 504–522 show a composition bias toward low complexity; the sequence is RGAAPSRGRGAAPPRGRAG. Arginine 510 bears the Asymmetric dimethylarginine; by PRMT1 mark. Arginine 518 bears the Asymmetric dimethylarginine; by PRMT1; alternate mark. Arginine 518 bears the Omega-N-methylarginine; by PRMT1; alternate mark. Residues 518–549 are interaction with SMN; it reads RGRAGYSQRGGPGSARGVRGARGGAQQQRGRG. Arginine 526 is modified (asymmetric dimethylarginine; alternate). Arginine 526 is modified (omega-N-methylarginine; alternate). A 1-5 repeat occupies 526-528; the sequence is RGG. Asymmetric dimethylarginine; by PRMT1; alternate is present on residues arginine 536 and arginine 539. An omega-N-methylarginine; by PRMT1; alternate mark is found at arginine 536 and arginine 539. 3 tandem repeats follow at residues 539–541, 554–556, and 557–559. Residues 550–562 show a composition bias toward gly residues; sequence VRGARGGRGGNVG. A Bipartite nuclear localization signal motif is present at residues 564-578; that stretch reads KRKADGYNQPDTKRR. A compositionally biased stretch (polar residues) spans 580–595; the sequence is TNNQNWGSQPIAQQPL. Position 587 is a phosphoserine (serine 587). Lysine 607 is covalently cross-linked (Glycyl lysine isopeptide (Lys-Gly) (interchain with G-Cter in SUMO2)). The segment covering 611 to 623 has biased composition (polar residues); sequence QEFYQDTFGQQWK.

As to quaternary structure, identified in the spliceosome C complex. Component of the coding region determinant (CRD)-mediated complex, composed of DHX9, HNRNPU, IGF2BP1, SYNCRIP and YBX1. Identified in a mRNP complex, at least composed of DHX9, DDX3X, ELAVL1, HNRNPU, IGF2BP1, ILF3, PABPC1, PCBP2, PTBP2, STAU1, STAU2, SYNCRIP and YBX1. Identified in a mRNP granule complex, at least composed of ACTB, ACTN4, DHX9, ERG, HNRNPA1, HNRNPA2B1, HNRNPAB, HNRNPD, HNRNPL, HNRNPR, HNRNPU, HSPA1, HSPA8, IGF2BP1, ILF2, ILF3, NCBP1, NCL, PABPC1, PABPC4, PABPN1, RPLP0, RPS3, RPS3A, RPS4X, RPS8, RPS9, SYNCRIP, YBX1 and untranslated mRNAs. Interacts with GTPBP1. Isoform 1 is a component of the APOB mRNA editosome complex. Isoform 1 interacts with APOBEC1 and A1CF. Part of a complex associated with the FOS mCRD domain and consisting of PABPC1, PAIP1, CSDE1/UNR, HNRPD and SYNCRIP. Isoform 2 interacts with HNRPR. Interacts with POLR2A hyperphosphorylated C-terminal domain. Interacts with HABP4. Identified in a histone pre-mRNA complex, at least composed of ERI1, LSM11, SLBP, SNRPB, SYNCRIP and YBX1. Isoform 1 and isoform 2 interact with SMN. Isoform 2 interacts through its C-terminal domain with SYT7, SYT8 and SYT9. The non-phosphorylated and phosphorylated forms are colocalized with PAIP1 in polysomes. Post-translationally, phosphorylated on tyrosine. The membrane-bound form found in microsomes is phosphorylated in vitro by insulin receptor tyrosine kinase (INSR). Phosphorylation is inhibited upon binding to RNA, whereas the cytoplasmic form is poorly phosphorylated. In terms of tissue distribution, ubiquitous. Detected in heart, brain, spleen, lung, liver, skeletal muscle, adipocytes, kidney and testis.

It localises to the nucleus. The protein localises to the nucleoplasm. The protein resides in the microsome. It is found in the cytoplasm. In terms of biological role, heterogeneous nuclear ribonucleoprotein (hnRNP) implicated in mRNA processing mechanisms. Component of the CRD-mediated complex that promotes MYC mRNA stability. Isoform 1 and isoform 2 are associated in vitro with pre-mRNA, splicing intermediates and mature mRNA protein complexes. Isoform 1 binds to apoB mRNA AU-rich sequences. Isoform 1 is part of the APOB mRNA editosome complex and may modulate the postranscriptional C to U RNA-editing of the APOB mRNA through either by binding to A1CF (APOBEC1 complementation factor), to APOBEC1 or to RNA itself. May be involved in translationally coupled mRNA turnover. Implicated with other RNA-binding proteins in the cytoplasmic deadenylation/translational and decay interplay of the FOS mRNA mediated by the major coding-region determinant of instability (mCRD) domain. Interacts in vitro preferentially with poly(A) and poly(U) RNA sequences. Isoform 2 may be involved in cytoplasmic vesicle-based mRNA transport through interaction with synaptotagmins. The polypeptide is Heterogeneous nuclear ribonucleoprotein Q (Syncrip) (Mus musculus (Mouse)).